Consider the following 381-residue polypeptide: Alkanesulfonate monooxygenase (381 aa).

It belongs to the SsuD family. As to quaternary structure, homotetramer.

It catalyses the reaction an alkanesulfonate + FMNH2 + O2 = an aldehyde + FMN + sulfite + H2O + 2 H(+). Its function is as follows. Catalyzes the desulfonation of aliphatic sulfonates. The sequence is that of Alkanesulfonate monooxygenase from Shigella flexneri.